The sequence spans 664 residues: SPARC-like protein 1 (664 aa).

The first 16 residues, methionine 1–alanine 16, serve as a signal peptide directing secretion. The segment at serine 25–threonine 34 is O-glycosylated at one additional site. The tract at residues serine 28 to aspartate 360 is disordered. O-linked (GalNAc...) threonine glycosylation is found at threonine 31 and threonine 40. An O-linked (GalNAc...) serine glycan is attached at serine 44. The span at aspartate 62–serine 84 shows a compositional bias: basic and acidic residues. 3 positions are modified to phosphoserine: serine 76, serine 84, and serine 92. Residues alanine 85 to glutamate 94 are compositionally biased toward polar residues. The segment covering glycine 96–glycine 105 has biased composition (basic and acidic residues). Threonine 116 is a glycosylation site (O-linked (GalNAc...) threonine). A compositionally biased stretch (basic and acidic residues) spans leucine 120 to glutamate 136. The span at serine 146–serine 156 shows a compositional bias: polar residues. Asparagine 169 carries an N-linked (GlcNAc...) asparagine glycan. Basic residues predominate over residues tyrosine 170–lysine 180. Serine 171 bears the Phosphoserine mark. Asparagine 176 and asparagine 196 each carry an N-linked (GlcNAc...) asparagine glycan. The segment covering glutamine 188 to asparagine 199 has biased composition (polar residues). Basic and acidic residues predominate over residues aspartate 216–glutamate 235. 2 stretches are compositionally biased toward acidic residues: residues aspartate 236–aspartate 248 and aspartate 259–asparagine 280. A Phosphoserine modification is found at serine 272. Asparagine 280 is a glycosylation site (N-linked (GlcNAc...) asparagine). Positions serine 306–valine 316 are enriched in basic and acidic residues. Threonine 331 carries an O-linked (GalNAc...) threonine glycan. Residues aspartate 339–glycine 349 are compositionally biased toward acidic residues. A phosphoserine mark is found at serine 358 and serine 365. Residues glutamate 388–arginine 426 form a disordered region. O-linked (GalNAc...) threonine glycosylation occurs at threonine 398. A compositionally biased stretch (basic and acidic residues) spans proline 401–glutamate 411. A glycan (N-linked (GlcNAc...) asparagine) is linked at asparagine 412. Residue serine 420 is modified to Phosphoserine. The region spanning serine 432–cysteine 454 is the Follistatin-like domain. 7 disulfide bridges follow: cysteine 433–cysteine 444, cysteine 438–cysteine 454, cysteine 456–cysteine 490, cysteine 462–cysteine 483, cysteine 472–cysteine 509, cysteine 515–cysteine 626, and cysteine 634–cysteine 650. One can recognise a Kazal-like domain in the interval glycine 450–serine 511. The N-linked (GlcNAc...) asparagine glycan is linked to asparagine 476. The region spanning proline 622–aspartate 657 is the EF-hand domain. 5 residues coordinate Ca(2+): aspartate 635, asparagine 637, aspartate 639, histidine 641, and glutamate 646.

This sequence belongs to the SPARC family. Post-translationally, N- and O-glycosylated. O-glycosylated with a core 1 or possibly core 8 glycan. Highly expressed in lymph node, brain, heart, lung, skeletal muscle, ovary, small intestine, and colon, with lower levels in placenta, pancreas, testis, spleen, and thymus, and no expression in kidney, liver, and peripheral blood leukocytes.

It localises to the secreted. Its subcellular location is the extracellular space. It is found in the extracellular matrix. The polypeptide is SPARC-like protein 1 (SPARCL1) (Homo sapiens (Human)).